Consider the following 278-residue polypeptide: UPF0750 membrane protein YxkD (278 aa).

5 consecutive transmembrane segments (helical) span residues 8–28 (VLMLVIGAFFFALAVNLFAIP), 46–66 (LFQWSPGVTNFILNAFLLLIG), 77–97 (YTIIAVAANSLFLHLTHGWSI), 101–121 (ELIINTIFAGVFAGVGIGMII), and 145–165 (ISYALLFFDLIVVFSSYFIIG).

It belongs to the UPF0750 family.

The protein localises to the cell membrane. The polypeptide is UPF0750 membrane protein YxkD (yxkD) (Bacillus subtilis (strain 168)).